Here is an 85-residue protein sequence, read N- to C-terminus: UPF0298 protein SUB0431 (85 aa).

The protein belongs to the UPF0298 family.

The protein resides in the cytoplasm. The sequence is that of UPF0298 protein SUB0431 from Streptococcus uberis (strain ATCC BAA-854 / 0140J).